Here is a 383-residue protein sequence, read N- to C-terminus: Paralemmin-1 (383 aa).

Methionine 1 bears the N-acetylmethionine mark. A coiled-coil region spans residues 5–102 (ATDTASQQER…KEIDVLEFGE (98 aa)). 3 disordered regions span residues 51–163 (RERW…GSTM), 242–295 (TLSE…GQEP), and 334–375 (ATPR…MKKP). Over residues 69–96 (DMRKQMQEDEQKARGLEESITRLEKEID) the composition is skewed to basic and acidic residues. 2 stretches are compositionally biased toward polar residues: residues 109 to 124 (KENS…QSAS) and 133 to 143 (ETLVNAQQTPL). Residues serine 116, serine 122, and serine 124 each carry the phosphoserine modification. A phosphothreonine mark is found at threonine 141, threonine 145, and threonine 153. A phosphoserine mark is found at serine 157 and serine 161. At threonine 242 the chain carries Phosphothreonine. Serine 244 carries the phosphoserine modification. Residues 257 to 273 (GLAEDVTRTTPSRREIT) show a composition bias toward basic and acidic residues. Residues 285–295 (GPPGIQPGQEP) are compositionally biased toward low complexity. Residue serine 345 is modified to Phosphoserine. The segment covering 357–367 (QTGPTTTPSDT) has biased composition (polar residues). Residues threonine 361, threonine 362, and threonine 363 each carry the phosphothreonine modification. Serine 365 is subject to Phosphoserine. Threonine 367 is subject to Phosphothreonine. S-palmitoyl cysteine attachment occurs at residues cysteine 377 and cysteine 379. Cysteine 380 is subject to Cysteine methyl ester. Cysteine 380 carries S-farnesyl cysteine lipidation. The propeptide at 381–383 (SVM) is removed in mature form.

Belongs to the paralemmin family. As to quaternary structure, interacts with dopamine receptor DRD3. In terms of tissue distribution, expression is highest in brain, intermediate in adrenal gland and kidney, and much lower or undetectable in other tissues. Isoform 1 is the predominant isoform in most tissues except brain and kidney where isoform 2 predominates.

Its subcellular location is the cell membrane. The protein localises to the cell projection. It is found in the filopodium membrane. It localises to the axon. The protein resides in the dendrite. Its subcellular location is the dendritic spine. The protein localises to the basolateral cell membrane. It is found in the apicolateral cell membrane. Functionally, involved in plasma membrane dynamics and cell process formation. Isoform 1 and isoform 2 are necessary for axonal and dendritic filopodia induction, for dendritic spine maturation and synapse formation in a palmitoylation-dependent manner. This chain is Paralemmin-1 (Palm), found in Mus musculus (Mouse).